The sequence spans 489 residues: Kynureninase 2 (489 aa).

Positions 1-12 (MDASAAISQLRQ) are enriched in polar residues. A disordered region spans residues 1 to 25 (MDASAAISQLRQGQKPEWPQNANTS). Residues L149, T150, 177–180 (FPSD), D261, H264, and Y286 each bind pyridoxal 5'-phosphate. N6-(pyridoxal phosphate)lysine is present on K287. Residues W317 and N345 each coordinate pyridoxal 5'-phosphate.

It belongs to the kynureninase family. Homodimer. It depends on pyridoxal 5'-phosphate as a cofactor.

The protein resides in the cytoplasm. The enzyme catalyses L-kynurenine + H2O = anthranilate + L-alanine + H(+). The catalysed reaction is 3-hydroxy-L-kynurenine + H2O = 3-hydroxyanthranilate + L-alanine + H(+). It functions in the pathway amino-acid degradation; L-kynurenine degradation; L-alanine and anthranilate from L-kynurenine: step 1/1. It participates in cofactor biosynthesis; NAD(+) biosynthesis; quinolinate from L-kynurenine: step 2/3. In terms of biological role, catalyzes the cleavage of L-kynurenine (L-Kyn) and L-3-hydroxykynurenine (L-3OHKyn) into anthranilic acid (AA) and 3-hydroxyanthranilic acid (3-OHAA), respectively. The polypeptide is Kynureninase 2 (Phaeosphaeria nodorum (strain SN15 / ATCC MYA-4574 / FGSC 10173) (Glume blotch fungus)).